We begin with the raw amino-acid sequence, 542 residues long: Putative beta-glucosidase 23 (542 aa).

Positions 1–29 (MAACTSSLVSLLLLLLLLLLLLVAGEATA) are cleaved as a signal peptide. An N-linked (GlcNAc...) asparagine glycan is attached at N34. Q88 serves as a coordination point for a beta-D-glucoside. N135 is a glycosylation site (N-linked (GlcNAc...) asparagine). H216 is a binding site for a beta-D-glucoside. E262 acts as the Proton donor in catalysis. Cysteines 281 and 289 form a disulfide. Y405 contacts a beta-D-glucoside. N-linked (GlcNAc...) asparagine glycosylation is present at N445. 2 residues coordinate a beta-D-glucoside: W476 and F492.

The protein belongs to the glycosyl hydrolase 1 family.

The catalysed reaction is Hydrolysis of terminal, non-reducing beta-D-glucosyl residues with release of beta-D-glucose.. The sequence is that of Putative beta-glucosidase 23 (BGLU23) from Oryza sativa subsp. japonica (Rice).